The following is a 1412-amino-acid chain: DNA-directed RNA polymerase subunit beta' (1412 aa).

Zn(2+)-binding residues include C70, C72, C85, and C88. Mg(2+) contacts are provided by D460, D462, and D464. Positions 819, 893, 900, and 903 each coordinate Zn(2+). The tract at residues 1392 to 1412 (EEAFEFGTPSAPAEEPQHPAE) is disordered.

It belongs to the RNA polymerase beta' chain family. In terms of assembly, the RNAP catalytic core consists of 2 alpha, 1 beta, 1 beta' and 1 omega subunit. When a sigma factor is associated with the core the holoenzyme is formed, which can initiate transcription. Mg(2+) is required as a cofactor. It depends on Zn(2+) as a cofactor.

The catalysed reaction is RNA(n) + a ribonucleoside 5'-triphosphate = RNA(n+1) + diphosphate. In terms of biological role, DNA-dependent RNA polymerase catalyzes the transcription of DNA into RNA using the four ribonucleoside triphosphates as substrates. This chain is DNA-directed RNA polymerase subunit beta', found in Burkholderia mallei (strain NCTC 10247).